The following is a 469-amino-acid chain: Glutamine synthetase (469 aa).

Residues 14-99 (NDVKFVDLRF…VCDILDPVSG (86 aa)) form the GS beta-grasp domain. In terms of domain architecture, GS catalytic spans 106–469 (RRGTAKKAEA…PVEYDMYYSA (364 aa)). Mg(2+) is bound by residues glutamate 131 and glutamate 133. Glutamate 209 is an ATP binding site. Mg(2+)-binding residues include glutamate 214 and aspartate 221. Residues 265–266 (NG) and glycine 266 each bind L-glutamate. Histidine 270 contributes to the Mg(2+) binding site. Residues 272–274 (HQS) and serine 274 each bind ATP. Arginine 322, glutamate 328, and arginine 340 together coordinate L-glutamate. The ATP site is built by arginine 340, arginine 345, and lysine 353. Glutamate 358 contacts Mg(2+). An L-glutamate-binding site is contributed by arginine 360. Tyrosine 398 bears the O-AMP-tyrosine mark.

This sequence belongs to the glutamine synthetase family. Oligomer of 12 subunits arranged in the form of two hexameric ring. Requires Mg(2+) as cofactor.

The protein localises to the cytoplasm. The catalysed reaction is L-glutamate + NH4(+) + ATP = L-glutamine + ADP + phosphate + H(+). The activity of this enzyme could be controlled by adenylation under conditions of abundant glutamine. In terms of biological role, catalyzes the ATP-dependent biosynthesis of glutamine from glutamate and ammonia. The chain is Glutamine synthetase from Rhizobium leguminosarum bv. viciae.